Reading from the N-terminus, the 149-residue chain is Calmodulin (149 aa).

Position 2 is an N-acetylalanine (Ala2). 4 consecutive EF-hand domains span residues 8 to 43 (EQIAEFKEAFSLFDKDGDGTITTKELGTVMRSLGQN), 44 to 79 (PTEAELQDMINEVDADGNGTIDFPEFLSLMARKMKD), 81 to 116 (DTEEELIEAFKVFDRDGNGLISAAELRHVMTNLGEK), and 117 to 149 (LTDEEVDEMIREADIDGDGHINYEEFVRMMMAK). Asp21, Asp23, Asp25, Thr27, Glu32, Asp57, Asp59, Asn61, Thr63, Glu68, Asp94, Asp96, Asn98, and Glu105 together coordinate Ca(2+). Lys116 carries the N6,N6,N6-trimethyllysine modification. The Ca(2+) site is built by Asp130, Asp132, Asp134, His136, and Glu141.

Belongs to the calmodulin family.

Its function is as follows. Calmodulin mediates the control of a large number of enzymes, ion channels and other proteins by Ca(2+). Among the enzymes to be stimulated by the calmodulin-Ca(2+) complex are a number of protein kinases and phosphatases. This chain is Calmodulin, found in Tetrahymena pyriformis.